The following is a 117-amino-acid chain: uncharacterized protein (117 aa).

This is an uncharacterized protein from Acheta domesticus (House cricket).